A 141-amino-acid polypeptide reads, in one-letter code: ATP synthase epsilon chain (141 aa).

This sequence belongs to the ATPase epsilon chain family. F-type ATPases have 2 components, CF(1) - the catalytic core - and CF(0) - the membrane proton channel. CF(1) has five subunits: alpha(3), beta(3), gamma(1), delta(1), epsilon(1). CF(0) has three main subunits: a, b and c.

It localises to the cell inner membrane. In terms of biological role, produces ATP from ADP in the presence of a proton gradient across the membrane. The polypeptide is ATP synthase epsilon chain (Hahella chejuensis (strain KCTC 2396)).